Here is a 252-residue protein sequence, read N- to C-terminus: Hydroxyacylglutathione hydrolase (252 aa).

Zn(2+) is bound by residues histidine 54, histidine 56, aspartate 58, histidine 59, histidine 111, aspartate 128, and histidine 166.

The protein belongs to the metallo-beta-lactamase superfamily. Glyoxalase II family. In terms of assembly, monomer. The cofactor is Zn(2+).

It catalyses the reaction an S-(2-hydroxyacyl)glutathione + H2O = a 2-hydroxy carboxylate + glutathione + H(+). It participates in secondary metabolite metabolism; methylglyoxal degradation; (R)-lactate from methylglyoxal: step 2/2. In terms of biological role, thiolesterase that catalyzes the hydrolysis of S-D-lactoyl-glutathione to form glutathione and D-lactic acid. This is Hydroxyacylglutathione hydrolase from Vibrio parahaemolyticus serotype O3:K6 (strain RIMD 2210633).